Here is a 667-residue protein sequence, read N- to C-terminus: NADPH--cytochrome P450 reductase (667 aa).

Over 1–8 (MEILESID) the chain is Lumenal. Residues 9 to 29 (FIEVLILDNLGAIIIVAVIVG) traverse the membrane as a helical segment. At 30–667 (TYLYMNKPPP…HGRYLQDVWF (638 aa)) the chain is on the cytoplasmic side. Positions 72-215 (MKIFFGTQTR…DFNRWKKDMW (144 aa)) constitute a Flavodoxin-like domain. Residues 164–173 (LGNKTYEHYN) and Asp199 contribute to the FMN site. In terms of domain architecture, FAD-binding FR-type spans 277–511 (KNPYYAEVLE…FVRESHFKLP (235 aa)). Arg297 provides a ligand contact to NADP(+). Residues 468–470 (TSV) and 484–487 (GVAS) contribute to the FAD site. NADP(+)-binding positions include Thr527, 586 to 587 (SR), and 592 to 596 (KVYVQ). Position 666 (Trp666) interacts with FAD.

Belongs to the NADPH--cytochrome P450 reductase family. It in the N-terminal section; belongs to the flavodoxin family. The protein in the C-terminal section; belongs to the flavoprotein pyridine nucleotide cytochrome reductase family. FAD serves as cofactor. The cofactor is FMN.

It is found in the endoplasmic reticulum membrane. The enzyme catalyses 2 oxidized [cytochrome P450] + NADPH = 2 reduced [cytochrome P450] + NADP(+) + H(+). Functionally, this enzyme is required for electron transfer from NADP to cytochrome P450 in microsomes. It can also provide electron transfer to heme oxygenase and cytochrome B5. In Dictyostelium discoideum (Social amoeba), this protein is NADPH--cytochrome P450 reductase (redB).